The sequence spans 346 residues: MTQSLTIRRPDDWHLHLRDGAMLAAVLPETARHFARAIVMPNLVPPVVTGAQAAAYRDRILATLPKGMNFEPLMTLYLTEQTDPDDLAAAHTSGLITSVKLYPAGATTNSASGVKDFDKVRPVLERMAEIGCPLCVHGEVTDREIDIFDREAVFIDRVLDPIRRATPGLRVIMEHITTKDGADYVAANPEGLGATITVQHLMFDRNDMLVGGMRPHYYCLPILKRRHHREALVAAATSGDARYFLGTDSAPHPTHAKEAECCAAGCFTAPIALSCLAHVFEEAGALDKLEGFTSLNGPAFYGLPVNADTITLSKADPLDIPKTLPAGEHTVTVFDPGVPLHWRVTR.

Zn(2+) is bound by residues His-14 and His-16. Substrate contacts are provided by residues 16–18 (HLR) and Asn-42. Residues Lys-100, His-137, and His-175 each coordinate Zn(2+). Lys-100 carries the N6-carboxylysine modification. Substrate is bound at residue His-137. Leu-220 is a binding site for substrate. Zn(2+) is bound at residue Asp-248. Asp-248 is an active-site residue. Residues His-252 and Ala-264 each contribute to the substrate site.

It belongs to the metallo-dependent hydrolases superfamily. DHOase family. Class II DHOase subfamily. Homodimer. The cofactor is Zn(2+).

The enzyme catalyses (S)-dihydroorotate + H2O = N-carbamoyl-L-aspartate + H(+). It participates in pyrimidine metabolism; UMP biosynthesis via de novo pathway; (S)-dihydroorotate from bicarbonate: step 3/3. Catalyzes the reversible cyclization of carbamoyl aspartate to dihydroorotate. The polypeptide is Dihydroorotase (Ruegeria pomeroyi (strain ATCC 700808 / DSM 15171 / DSS-3) (Silicibacter pomeroyi)).